We begin with the raw amino-acid sequence, 273 residues long: Alkaline ceramidase 1 (273 aa).

Over 1 to 36 the chain is Lumenal; that stretch reads MHVPGTRAKMSSIFAYQSSEVDWCESNFQHSELVAE. Positions 22, 23, 25, 27, and 36 each coordinate Ca(2+). Residues 37 to 57 form a helical membrane-spanning segment; sequence FYNTFSNVFFLIFGPLMMFLM. Residues 58 to 72 are Cytoplasmic-facing; sequence HPYAQKRTRCFYGVS. 2 consecutive transmembrane segments (helical) span residues 73 to 93 and 94 to 114; these read VLFMLIGLFSMYFHMTLSFLG and QLLDEISILWLLASGYSVWLP. H86 contacts Zn(2+). Residues 115–126 are Cytoplasmic-facing; that stretch reads RCYFPKFVKGNR. Residues 127–147 traverse the membrane as a helical segment; it reads FYFSCLVTITTIISTFLTFVK. Over 148-149 the chain is Lumenal; that stretch reads PT. A helical transmembrane segment spans residues 150–167; it reads VNAYALNSIAIHILYIVR. Over 168–177 the chain is Cytoplasmic; that stretch reads TEYKKIRDDD. A helical transmembrane segment spans residues 178-198; it reads LRHLIAVSVVLWAAALTSWIS. At 199 to 215 the chain is on the lumenal side; it reads DRVLCSFWQRIHFYYLH. 2 residues coordinate Zn(2+): H215 and H219. A helical membrane pass occupies residues 216–236; the sequence is SIWHVLISITFPYGIVTMALV. The Cytoplasmic segment spans residues 237–273; it reads DAKYEMPDKTLKVHYWPRDSWVIGLPYVEIQENDKNC.

It belongs to the alkaline ceramidase family. The cofactor is Zn(2+). Highly expressed in skin. Weakly or not expressed in other tissues. Expressed by granular layer of interfollicular epidermis, sebaceous glands and infundibulum.

It localises to the endoplasmic reticulum membrane. The enzyme catalyses an N-acylsphing-4-enine + H2O = sphing-4-enine + a fatty acid. It catalyses the reaction N-tetracosanoyl-sphing-4-enine + H2O = tetracosanoate + sphing-4-enine. It carries out the reaction an N-acylsphinganine + H2O = sphinganine + a fatty acid. The catalysed reaction is N-(9Z-octadecenoyl)-sphing-4-enine + H2O = sphing-4-enine + (9Z)-octadecenoate. The enzyme catalyses N-(15Z-tetracosenoyl)-sphing-4-enine + H2O = (15Z)-tetracosenoate + sphing-4-enine. It functions in the pathway lipid metabolism; sphingolipid metabolism. With respect to regulation, inhibited by sphingosine. Inhibited by Mn(2+), Zn(2+), and Cu(2+) in a dose-dependent manner. Slightly activated by Ca(2+) in a dose-dependent manner. In terms of biological role, endoplasmic reticulum ceramidase that catalyzes the hydrolysis of ceramides into sphingosine and free fatty acids at alkaline pH. Ceramides, sphingosine, and its phosphorylated form sphingosine-1-phosphate are bioactive lipids that mediate cellular signaling pathways regulating several biological processes including cell proliferation, apoptosis and differentiation. Exhibits a strong substrate specificity towards the natural stereoisomer of ceramides with D-erythro-sphingosine as a backbone and has a higher activity towards very long-chain unsaturated fatty acids like the C24:1-ceramide. May also hydrolyze dihydroceramides to produce dihydrosphingosine. ACER1 is a skin-specific ceramidase that regulates the levels of ceramides, sphingosine and sphingosine-1-phosphate in the epidermis, mediates the calcium-induced differentiation of epidermal keratinocytes and more generally plays an important role in skin homeostasis. The sequence is that of Alkaline ceramidase 1 from Mus musculus (Mouse).